We begin with the raw amino-acid sequence, 95 residues long: Small ribosomal subunit protein bS6 (95 aa).

The protein belongs to the bacterial ribosomal protein bS6 family.

Functionally, binds together with bS18 to 16S ribosomal RNA. In Shouchella clausii (strain KSM-K16) (Alkalihalobacillus clausii), this protein is Small ribosomal subunit protein bS6.